We begin with the raw amino-acid sequence, 276 residues long: Diaminopimelate epimerase (276 aa).

3 residues coordinate substrate: Asn13, Gln46, and Asn66. The active-site Proton donor is the Cys75. Residues 76 to 77 (GN), Asn159, Asn192, and 210 to 211 (ER) each bind substrate. Cys219 acts as the Proton acceptor in catalysis. 220 to 221 (GT) contacts substrate.

This sequence belongs to the diaminopimelate epimerase family. As to quaternary structure, homodimer.

Its subcellular location is the cytoplasm. It carries out the reaction (2S,6S)-2,6-diaminopimelate = meso-2,6-diaminopimelate. It functions in the pathway amino-acid biosynthesis; L-lysine biosynthesis via DAP pathway; DL-2,6-diaminopimelate from LL-2,6-diaminopimelate: step 1/1. Its function is as follows. Catalyzes the stereoinversion of LL-2,6-diaminopimelate (L,L-DAP) to meso-diaminopimelate (meso-DAP), a precursor of L-lysine and an essential component of the bacterial peptidoglycan. The polypeptide is Diaminopimelate epimerase (Pseudomonas aeruginosa (strain UCBPP-PA14)).